A 105-amino-acid polypeptide reads, in one-letter code: UPF0235 protein A1G_07140 (105 aa).

It belongs to the UPF0235 family.

The chain is UPF0235 protein A1G_07140 from Rickettsia rickettsii (strain Sheila Smith).